A 391-amino-acid chain; its full sequence is Terminal nucleotidyltransferase 5C (391 aa).

The protein belongs to the TENT family. As to quaternary structure, interacts with BCCIP and PABPC1; the interaction has no effect on TENT5C poly(A) polymerase function. Interacts with PLK4; this interaction leads to the TENT5C recruitment into the centrosome.

It localises to the nucleus. The protein resides in the cytoplasm. It is found in the cytoskeleton. Its subcellular location is the microtubule organizing center. The protein localises to the centrosome. The catalysed reaction is RNA(n) + ATP = RNA(n)-3'-adenine ribonucleotide + diphosphate. Its function is as follows. Catalyzes the transfer of one adenosine molecule from an ATP to an mRNA poly(A) tail bearing a 3'-OH terminal group and enhances mRNA stability and gene expression. Can also elongate RNA oligos ending with uridine molecule, provided that the sequence is adenosine-rich. Mainly targets mRNAs encoding endoplasmic reticulum-targeted protein. The protein is Terminal nucleotidyltransferase 5C of Macaca fascicularis (Crab-eating macaque).